The sequence spans 394 residues: Myb-like protein R (394 aa).

The next 2 helical transmembrane spans lie at 11–31 and 99–119; these read IGAQ…EFII and FFIG…LIIF. In terms of domain architecture, Myb-like spans 325 to 377; sequence GNWSLDEQKALMVEVSTLGNKSEINWFFISKQLFLKGISRNARECQRKHESIQ.

The protein resides in the membrane. This is Myb-like protein R (mybR) from Dictyostelium discoideum (Social amoeba).